Consider the following 427-residue polypeptide: 3-phosphoshikimate 1-carboxyvinyltransferase (427 aa).

Positions 20, 21, and 25 each coordinate 3-phosphoshikimate. Lys20 is a binding site for phosphoenolpyruvate. Phosphoenolpyruvate contacts are provided by Gly92 and Arg120. 3-phosphoshikimate contacts are provided by Ser166, Gln168, Asp312, and Lys339. A phosphoenolpyruvate-binding site is contributed by Gln168. The Proton acceptor role is filled by Asp312. The phosphoenolpyruvate site is built by Arg343 and Arg385.

This sequence belongs to the EPSP synthase family. As to quaternary structure, monomer.

The protein resides in the cytoplasm. The catalysed reaction is 3-phosphoshikimate + phosphoenolpyruvate = 5-O-(1-carboxyvinyl)-3-phosphoshikimate + phosphate. It participates in metabolic intermediate biosynthesis; chorismate biosynthesis; chorismate from D-erythrose 4-phosphate and phosphoenolpyruvate: step 6/7. Its function is as follows. Catalyzes the transfer of the enolpyruvyl moiety of phosphoenolpyruvate (PEP) to the 5-hydroxyl of shikimate-3-phosphate (S3P) to produce enolpyruvyl shikimate-3-phosphate and inorganic phosphate. The polypeptide is 3-phosphoshikimate 1-carboxyvinyltransferase (Streptococcus gordonii (strain Challis / ATCC 35105 / BCRC 15272 / CH1 / DL1 / V288)).